Reading from the N-terminus, the 1045-residue chain is Translation initiation factor IF-2 (1045 aa).

Disordered stretches follow at residues 1 to 169 (MSDE…AQAP) and 184 to 451 (QAPA…RGGP). The span at 83 to 94 (SGGGGSSAGGLS) shows a compositional bias: gly residues. Residues 103–123 (RAIEAAREHQERQAAERRAAE) show a composition bias toward basic and acidic residues. Residues 124–151 (ARAASEAAAARDAAAKSAAAAKAAAAPA) are compositionally biased toward low complexity. A compositionally biased stretch (pro residues) spans 152–163 (PEAPAAPAPTPA). Residues 184 to 199 (QAPAAPVAAAPAAPRA) are compositionally biased toward low complexity. Basic and acidic residues-rich tracts occupy residues 227–237 (EPSRDRRDDRS) and 302–323 (RNDRPQGDRPQGDRPQGDRPQG). The segment covering 338–348 (RPAPGARPGPG) has biased composition (pro residues). Residues 352–363 (GARPGVPASAPA) are compositionally biased toward low complexity. Basic and acidic residues-rich tracts occupy residues 381–393 (VGRKPEEDDDRRK) and 438–450 (RAREREKEKRRGG). Residues 540-710 (PRPPVVTVMG…LLLAEVMDLK (171 aa)) enclose the tr-type G domain. The G1 stretch occupies residues 549 to 556 (GHVDHGKT). Position 549–556 (549–556 (GHVDHGKT)) interacts with GTP. Residues 574–578 (GITQH) form a G2 region. A G3 region spans residues 596-599 (DTPG). GTP-binding positions include 596-600 (DTPGH) and 650-653 (NKMD). The segment at 650–653 (NKMD) is G4. The tract at residues 686-688 (SAK) is G5.

The protein belongs to the TRAFAC class translation factor GTPase superfamily. Classic translation factor GTPase family. IF-2 subfamily.

It is found in the cytoplasm. One of the essential components for the initiation of protein synthesis. Protects formylmethionyl-tRNA from spontaneous hydrolysis and promotes its binding to the 30S ribosomal subunits. Also involved in the hydrolysis of GTP during the formation of the 70S ribosomal complex. The protein is Translation initiation factor IF-2 of Caulobacter sp. (strain K31).